The following is a 266-amino-acid chain: Hydroxyacylglutathione hydrolase (266 aa).

The Zn(2+) site is built by H53, H55, D57, H58, H118, D140, and H178.

Belongs to the metallo-beta-lactamase superfamily. Glyoxalase II family. As to quaternary structure, monomer. It depends on Zn(2+) as a cofactor.

It catalyses the reaction an S-(2-hydroxyacyl)glutathione + H2O = a 2-hydroxy carboxylate + glutathione + H(+). It participates in secondary metabolite metabolism; methylglyoxal degradation; (R)-lactate from methylglyoxal: step 2/2. Thiolesterase that catalyzes the hydrolysis of S-D-lactoyl-glutathione to form glutathione and D-lactic acid. The polypeptide is Hydroxyacylglutathione hydrolase (Cupriavidus taiwanensis (strain DSM 17343 / BCRC 17206 / CCUG 44338 / CIP 107171 / LMG 19424 / R1) (Ralstonia taiwanensis (strain LMG 19424))).